Here is a 106-residue protein sequence, read N- to C-terminus: Large ribosomal subunit protein uL24 (106 aa).

This sequence belongs to the universal ribosomal protein uL24 family. In terms of assembly, part of the 50S ribosomal subunit.

One of two assembly initiator proteins, it binds directly to the 5'-end of the 23S rRNA, where it nucleates assembly of the 50S subunit. Its function is as follows. One of the proteins that surrounds the polypeptide exit tunnel on the outside of the subunit. The polypeptide is Large ribosomal subunit protein uL24 (Laribacter hongkongensis (strain HLHK9)).